The chain runs to 385 residues: Citrate synthase (385 aa).

Residues histidine 223, histidine 263, and aspartate 318 contribute to the active site.

The protein belongs to the citrate synthase family. Homodimer.

It catalyses the reaction oxaloacetate + acetyl-CoA + H2O = citrate + CoA + H(+). It participates in carbohydrate metabolism; tricarboxylic acid cycle; isocitrate from oxaloacetate: step 1/2. Its activity is regulated as follows. Allosterically inhibited by NADH. The sequence is that of Citrate synthase (gltA) from Thermoplasma acidophilum (strain ATCC 25905 / DSM 1728 / JCM 9062 / NBRC 15155 / AMRC-C165).